The sequence spans 65 residues: Conopeptide Vt3.2 (65 aa).

Residues 1-12 form the signal peptide; it reads LLFPLATLQLNA. A propeptide spanning residues 13-48 is cleaved from the precursor; it reads DQPVERNAENIQDLNPDKRFIFMPVPRRRGPYGSVH. Ser64 is modified (serine amide).

It belongs to the conotoxin M superfamily. As to quaternary structure, homodimer; disulfide-linked. In terms of tissue distribution, expressed by the venom duct.

The protein resides in the secreted. This Conus planorbis (Planorbis cone) protein is Conopeptide Vt3.2.